Reading from the N-terminus, the 161-residue chain is Anaerobic nitrite reductase GLB1 (161 aa).

The region spanning 9 to 157 (VFTEEQEALV…LVAAIKSEMK (149 aa)) is the Globin domain. The Homodimerization motif lies at 42–46 (EIAPS). Residues Ser52, Lys66, His70, Arg100, and His105 each contribute to the heme b site. Residues 112-123 (NEHFETRFALLE) carry the Homodimerization motif.

Belongs to the plant globin family. As to quaternary structure, homodimer. Heme b serves as cofactor. Root specific.

Its subcellular location is the cytoplasm. The protein resides in the nucleus. The catalysed reaction is Fe(III)-heme b-[protein] + nitric oxide + H2O = Fe(II)-heme b-[protein] + nitrite + 2 H(+). Its function is as follows. Phytoglobin that reduces nitrite to nitric oxide (NO) under anoxic conditions (e.g. during flooding or in waterlogged soil) and upon root nodulation. Required for general plant development and during nodulation, especially for the onset of symbiosis. Monitors nitric oxide (NO) levels during early phase of the nitrogen-fixing symbiosis and buffers oxygen in functioning nodules. May not function as an oxygen storage or transport protein. Has an unusually high affinity for O(2) through a hexacoordinate heme iron because of a very low dissociation constant. The polypeptide is Anaerobic nitrite reductase GLB1 (GLB1) (Trema tomentosum (Peach-leaf poison-bush)).